Reading from the N-terminus, the 135-residue chain is 30 kDa antigenic glycoprotein (135 aa).

A signal peptide spans 1–5 (GNTYS). 4 N-linked (GlcNAc...) asparagine glycosylation sites follow: Asn22, Asn31, Asn57, and Asn73.

The protein to H.contortus 15 kDa excretory/secretory protein.

It is found in the secreted. In Trichostrongylus colubriformis (Black scour worm), this protein is 30 kDa antigenic glycoprotein.